Reading from the N-terminus, the 278-residue chain is 4-hydroxy-3-methylbut-2-enyl diphosphate reductase (278 aa).

Residue Cys12 participates in [4Fe-4S] cluster binding. (2E)-4-hydroxy-3-methylbut-2-enyl diphosphate is bound by residues His41 and His74. Positions 41 and 74 each coordinate dimethylallyl diphosphate. Positions 41 and 74 each coordinate isopentenyl diphosphate. Cys96 is a [4Fe-4S] cluster binding site. His124 is a binding site for (2E)-4-hydroxy-3-methylbut-2-enyl diphosphate. Residue His124 participates in dimethylallyl diphosphate binding. His124 contributes to the isopentenyl diphosphate binding site. Glu126 functions as the Proton donor in the catalytic mechanism. (2E)-4-hydroxy-3-methylbut-2-enyl diphosphate is bound at residue Thr161. [4Fe-4S] cluster is bound at residue Cys189. Positions 217, 219, and 261 each coordinate (2E)-4-hydroxy-3-methylbut-2-enyl diphosphate. The dimethylallyl diphosphate site is built by Ser217, Asn219, and Ser261. Positions 217, 219, and 261 each coordinate isopentenyl diphosphate.

This sequence belongs to the IspH family. The cofactor is [4Fe-4S] cluster.

The enzyme catalyses isopentenyl diphosphate + 2 oxidized [2Fe-2S]-[ferredoxin] + H2O = (2E)-4-hydroxy-3-methylbut-2-enyl diphosphate + 2 reduced [2Fe-2S]-[ferredoxin] + 2 H(+). The catalysed reaction is dimethylallyl diphosphate + 2 oxidized [2Fe-2S]-[ferredoxin] + H2O = (2E)-4-hydroxy-3-methylbut-2-enyl diphosphate + 2 reduced [2Fe-2S]-[ferredoxin] + 2 H(+). The protein operates within isoprenoid biosynthesis; dimethylallyl diphosphate biosynthesis; dimethylallyl diphosphate from (2E)-4-hydroxy-3-methylbutenyl diphosphate: step 1/1. Its pathway is isoprenoid biosynthesis; isopentenyl diphosphate biosynthesis via DXP pathway; isopentenyl diphosphate from 1-deoxy-D-xylulose 5-phosphate: step 6/6. Functionally, catalyzes the conversion of 1-hydroxy-2-methyl-2-(E)-butenyl 4-diphosphate (HMBPP) into a mixture of isopentenyl diphosphate (IPP) and dimethylallyl diphosphate (DMAPP). Acts in the terminal step of the DOXP/MEP pathway for isoprenoid precursor biosynthesis. This chain is 4-hydroxy-3-methylbut-2-enyl diphosphate reductase, found in Anaeromyxobacter sp. (strain K).